The sequence spans 1185 residues: Ovostatin homolog 1 (1185 aa).

The signal sequence occupies residues 1–21 (MHVHVCVCLCVCIYTSSCVCA). N-linked (GlcNAc...) asparagine glycosylation is found at asparagine 80, asparagine 155, asparagine 347, asparagine 452, and asparagine 725.

Belongs to the protease inhibitor I39 (alpha-2-macroglobulin) family. Homotetramer.

The protein resides in the secreted. Is able to inhibit all four classes of proteinases by a unique 'trapping' mechanism. The protein is Ovostatin homolog 1 (OVOS1) of Homo sapiens (Human).